Here is a 49-residue protein sequence, read N- to C-terminus: SALYALYDFSPPARKMRAYTVRAYVHGSYSRRGPWYDFEPVPGASMDGL.

The protein belongs to the pancreatic ribonuclease family. In terms of processing, glycosylated. As to expression, milk.

It localises to the secreted. Manifests poly C-specific RNase activity toward yeast tRNA, elicits a dose-dependent inhibition of cell-free translation, inhibits formation of superoxide ions in vitro and inhibits the hemagglutinating activities of soybean lectin and Ricinus communis agglutinin 120. Inhibits HIV-1 reverse transcriptase. This is Glycolactin from Bos taurus (Bovine).